We begin with the raw amino-acid sequence, 115 residues long: Ribonuclease P protein component (115 aa).

This sequence belongs to the RnpA family. In terms of assembly, consists of a catalytic RNA component (M1 or rnpB) and a protein subunit.

The enzyme catalyses Endonucleolytic cleavage of RNA, removing 5'-extranucleotides from tRNA precursor.. Functionally, RNaseP catalyzes the removal of the 5'-leader sequence from pre-tRNA to produce the mature 5'-terminus. It can also cleave other RNA substrates such as 4.5S RNA. The protein component plays an auxiliary but essential role in vivo by binding to the 5'-leader sequence and broadening the substrate specificity of the ribozyme. The polypeptide is Ribonuclease P protein component (Macrococcus caseolyticus (strain JCSC5402) (Macrococcoides caseolyticum)).